A 208-amino-acid polypeptide reads, in one-letter code: Urease accessory protein UreG 2 (208 aa).

Gly-16–Thr-23 contributes to the GTP binding site.

The protein belongs to the SIMIBI class G3E GTPase family. UreG subfamily. In terms of assembly, homodimer. UreD, UreF and UreG form a complex that acts as a GTP-hydrolysis-dependent molecular chaperone, activating the urease apoprotein by helping to assemble the nickel containing metallocenter of UreC. The UreE protein probably delivers the nickel.

The protein localises to the cytoplasm. Facilitates the functional incorporation of the urease nickel metallocenter. This process requires GTP hydrolysis, probably effectuated by UreG. This is Urease accessory protein UreG 2 from Methylobacterium radiotolerans (strain ATCC 27329 / DSM 1819 / JCM 2831 / NBRC 15690 / NCIMB 10815 / 0-1).